The primary structure comprises 333 residues: S-adenosylmethionine-dependent nucleotide dehydratase (333 aa).

A Radical SAM core domain is found at 1–239 (MNIKTIVINW…SAPQKQNNVI (239 aa)). C16, C20, and C23 together coordinate [4Fe-4S] cluster.

Belongs to the radical SAM superfamily. Viperin family. It depends on [4Fe-4S] cluster as a cofactor.

It carries out the reaction GTP + AH2 + S-adenosyl-L-methionine = 3'-deoxy-3',4'-didehydro-GTP + 5'-deoxyadenosine + L-methionine + A + H2O + H(+). Its function is as follows. Expression of pVip56 in E.coli (strain MG1655) confers resistance to phage P1; has no effect against T7. Catalyzes the conversion of guanosine triphosphate (GTP) to 3'-deoxy-3',4'-didehydro-GTP (ddhGTP), probably via a SAM-dependent radical mechanism. The modified nucleotide represses transcription from T7 RNA polymerase-directed genes (possibly by acting as chain terminators), strongly suggesting these nucleotides block viral polymerase transcription. How this protein allows bacteria to resist viruses that do not encode their own RNA polymerase (such as lambda, P1) is unknown. In Fibrobacter sp. (strain UWH6), this protein is S-adenosylmethionine-dependent nucleotide dehydratase.